A 141-amino-acid chain; its full sequence is Large ribosomal subunit protein uL11 (141 aa).

It belongs to the universal ribosomal protein uL11 family. Part of the ribosomal stalk of the 50S ribosomal subunit. Interacts with L10 and the large rRNA to form the base of the stalk. L10 forms an elongated spine to which L12 dimers bind in a sequential fashion forming a multimeric L10(L12)X complex. Post-translationally, one or more lysine residues are methylated.

In terms of biological role, forms part of the ribosomal stalk which helps the ribosome interact with GTP-bound translation factors. This is Large ribosomal subunit protein uL11 from Lactobacillus delbrueckii subsp. bulgaricus (strain ATCC 11842 / DSM 20081 / BCRC 10696 / JCM 1002 / NBRC 13953 / NCIMB 11778 / NCTC 12712 / WDCM 00102 / Lb 14).